The following is a 312-amino-acid chain: Carbonic anhydrase 4 (312 aa).

Residues 1–18 form the signal peptide; that stretch reads MRMLLALLALSAARPSAS. The region spanning 21 to 285 is the Alpha-carbonic anhydrase domain; that stretch reads SHWCYEVQAE…LGQRTVIKSG (265 aa). Cystine bridges form between C24-C36 and C46-C229. Catalysis depends on H88, which acts as the Proton donor/acceptor. H115, H117, and H140 together coordinate Zn(2+). 225–226 is a substrate binding site; it reads TT. A lipid anchor (GPI-anchor amidated serine) is attached at S284. A propeptide spans 285-312 (removed in mature form); it reads GAPGRPLPWALPALLGPMLACLLAGFLR.

It belongs to the alpha-carbonic anhydrase family. As to quaternary structure, interacts with SLC4A4. Requires Zn(2+) as cofactor. Expressed in the endothelium of the choriocapillaris in eyes (at protein level). Not expressed in the retinal epithelium at detectable levels.

Its subcellular location is the cell membrane. It catalyses the reaction hydrogencarbonate + H(+) = CO2 + H2O. Its activity is regulated as follows. Activated by histamine, L-adrenaline, D-phenylalanine, L- and D-histidine. Inhibited by coumarins, saccharin, sulfonamide derivatives such as acetazolamide and Foscarnet (phosphonoformate trisodium salt). Its function is as follows. Catalyzes the reversible hydration of carbon dioxide into bicarbonate and protons and thus is essential to maintaining intracellular and extracellular pH. May stimulate the sodium/bicarbonate transporter activity of SLC4A4 that acts in pH homeostasis. It is essential for acid overload removal from the retina and retina epithelium, and acid release in the choriocapillaris in the choroid. The sequence is that of Carbonic anhydrase 4 from Homo sapiens (Human).